The chain runs to 334 residues: Formamidase (334 aa).

One can recognise a CN hydrolase domain in the interval 14–260 (FLVAAIQFPV…WEIVTGEIYP (247 aa)). Glu-60 acts as the Proton acceptor in catalysis. The active-site Proton donor is the Lys-133. Residue Cys-166 is the Nucleophile of the active site.

This sequence belongs to the carbon-nitrogen hydrolase superfamily. Aliphatic amidase family.

The enzyme catalyses formamide + H2O = formate + NH4(+). Functionally, is an aliphatic amidase with a restricted substrate specificity, as it only hydrolyzes formamide. The polypeptide is Formamidase (Helicobacter pylori (strain HPAG1)).